The primary structure comprises 606 residues: Elongation factor 4 (606 aa).

The tr-type G domain maps to 10–192; it reads KNIRNFSIIA…ALVARVPPPQ (183 aa). GTP is bound by residues 22-27 and 139-142; these read DHGKST and NKID.

It belongs to the TRAFAC class translation factor GTPase superfamily. Classic translation factor GTPase family. LepA subfamily.

It is found in the cell inner membrane. It catalyses the reaction GTP + H2O = GDP + phosphate + H(+). Its function is as follows. Required for accurate and efficient protein synthesis under certain stress conditions. May act as a fidelity factor of the translation reaction, by catalyzing a one-codon backward translocation of tRNAs on improperly translocated ribosomes. Back-translocation proceeds from a post-translocation (POST) complex to a pre-translocation (PRE) complex, thus giving elongation factor G a second chance to translocate the tRNAs correctly. Binds to ribosomes in a GTP-dependent manner. In Nitrosococcus oceani (strain ATCC 19707 / BCRC 17464 / JCM 30415 / NCIMB 11848 / C-107), this protein is Elongation factor 4.